The sequence spans 87 residues: uncharacterized protein (87 aa).

Residues 42–62 (LADALYSAGSAAFTIAASLVA) form a helical membrane-spanning segment.

The protein belongs to the SPP1 holin family.

It localises to the membrane. This is an uncharacterized protein from Bacillus licheniformis.